The primary structure comprises 92 residues: Small ribosomal subunit protein uS19 (92 aa).

This sequence belongs to the universal ribosomal protein uS19 family.

In terms of biological role, protein S19 forms a complex with S13 that binds strongly to the 16S ribosomal RNA. In Yersinia pestis (strain Pestoides F), this protein is Small ribosomal subunit protein uS19.